Consider the following 205-residue polypeptide: MSQKIDTSELVVDFVGGAVGHRFRSGEGRGQALAKAAGLTRDATPEIVDATAGLGRDAFLLASLGAKVTLIERSEKMHALLAEGLARAAEEGGRYAETVARMTLLLGDSSLLLPDLKPQVVLVDPMHPPRGNSALVKKEMRQIREIVGTDPDAERLMQVALEAAQNRVVLKWPLRADPMVGLRKPSHQILGKSTRYDVFVKAKLS.

S-adenosyl-L-methionine is bound by residues 56–57, 72–73, and D124; these read RD and ER.

Belongs to the methyltransferase superfamily. RsmJ family.

It localises to the cytoplasm. It carries out the reaction guanosine(1516) in 16S rRNA + S-adenosyl-L-methionine = N(2)-methylguanosine(1516) in 16S rRNA + S-adenosyl-L-homocysteine + H(+). In terms of biological role, specifically methylates the guanosine in position 1516 of 16S rRNA. This chain is Ribosomal RNA small subunit methyltransferase J, found in Brucella anthropi (strain ATCC 49188 / DSM 6882 / CCUG 24695 / JCM 21032 / LMG 3331 / NBRC 15819 / NCTC 12168 / Alc 37) (Ochrobactrum anthropi).